We begin with the raw amino-acid sequence, 1151 residues long: Ankyrin and IPT/TIG repeat-containing protein C26H5.05 (1151 aa).

3 disordered regions span residues 77–104 (NLPS…AECL), 452–511 (KSRN…ENSR), and 516–535 (QLSA…KSVE). Polar residues predominate over residues 87 to 98 (SHASSPNLSNSQ). The span at 452–463 (KSRNLTKSEKTG) shows a compositional bias: basic and acidic residues. Composition is skewed to polar residues over residues 464-496 (KSNS…SDNP) and 517-532 (LSAS…STLK). One can recognise an IPT/TIG domain in the interval 658-739 (PLISRIIPNK…SSEAPVMFTY (82 aa)). ANK repeat units follow at residues 861 to 890 (SGRS…DVNK) and 894 to 923 (LGYT…KPDV). The tract at residues 1041–1067 (PPPYSEFADDTTAQAGSSKRDSAISED) is disordered. The segment covering 1058–1067 (SKRDSAISED) has biased composition (basic and acidic residues). A helical membrane pass occupies residues 1113-1133 (MDFMLFSFWLPALLLLSIFGL).

The protein localises to the vacuole membrane. The sequence is that of Ankyrin and IPT/TIG repeat-containing protein C26H5.05 from Schizosaccharomyces pombe (strain 972 / ATCC 24843) (Fission yeast).